The following is a 192-amino-acid chain: Der GTPase-activating protein YihI (192 aa).

Residues 1-80 (MSRTKKTRRI…KAAVKEVKDP (80 aa)) are disordered. Composition is skewed to basic and acidic residues over residues 9 to 25 (RITD…KPEQ), 37 to 48 (TRYELDAKAREE), and 65 to 80 (DPAE…VKDP).

Belongs to the YihI family. Interacts with Der.

In terms of biological role, a GTPase-activating protein (GAP) that modifies Der/EngA GTPase function. May play a role in ribosome biogenesis. This chain is Der GTPase-activating protein YihI, found in Actinobacillus pleuropneumoniae serotype 5b (strain L20).